We begin with the raw amino-acid sequence, 300 residues long: Ribosomal RNA small subunit methyltransferase H (300 aa).

S-adenosyl-L-methionine is bound by residues 46 to 48 (GGH), Asp-65, Phe-92, Asp-107, and Gln-114.

Belongs to the methyltransferase superfamily. RsmH family.

It is found in the cytoplasm. It catalyses the reaction cytidine(1402) in 16S rRNA + S-adenosyl-L-methionine = N(4)-methylcytidine(1402) in 16S rRNA + S-adenosyl-L-homocysteine + H(+). In terms of biological role, specifically methylates the N4 position of cytidine in position 1402 (C1402) of 16S rRNA. The sequence is that of Ribosomal RNA small subunit methyltransferase H from Prochlorococcus marinus (strain MIT 9312).